The sequence spans 359 residues: Membrane-bound lytic murein transglycosylase C (359 aa).

The signal sequence occupies residues 1-16; the sequence is MKKYLALALIAPLLIS. The N-palmitoyl cysteine moiety is linked to residue Cys17. A lipid anchor (S-diacylglycerol cysteine) is attached at Cys17.

This sequence belongs to the transglycosylase Slt family.

It is found in the cell outer membrane. The enzyme catalyses Exolytic cleavage of the (1-&gt;4)-beta-glycosidic linkage between N-acetylmuramic acid (MurNAc) and N-acetylglucosamine (GlcNAc) residues in peptidoglycan, from either the reducing or the non-reducing ends of the peptidoglycan chains, with concomitant formation of a 1,6-anhydrobond in the MurNAc residue.. In terms of biological role, murein-degrading enzyme. May play a role in recycling of muropeptides during cell elongation and/or cell division. This chain is Membrane-bound lytic murein transglycosylase C, found in Escherichia coli O81 (strain ED1a).